A 189-amino-acid chain; its full sequence is uncharacterized protein (189 aa).

This is an uncharacterized protein from Aquifex aeolicus (strain VF5).